Reading from the N-terminus, the 415-residue chain is Putative transcription factor BOFH (415 aa).

The segment at Ser-159–Asp-221 is disordered. The segment covering Ile-174–Trp-183 has biased composition (gly residues). A compositionally biased stretch (basic residues) spans Gln-193–Leu-202. A compositionally biased stretch (acidic residues) spans Glu-206–Met-220. DNA-binding regions lie at residues Arg-234–Phe-238, Asn-303–Tyr-310, and Tyr-374–Thr-377.

Belongs to the FLO/LFY family. In terms of tissue distribution, acts in the floral primordia.

It is found in the nucleus. Functionally, controls floral meristem identity. Is required very early in flower development and may act here as a transcription factor. The sequence is that of Putative transcription factor BOFH from Brassica oleracea var. botrytis (Cauliflower).